A 122-amino-acid polypeptide reads, in one-letter code: Large ribosomal subunit protein uL14 (122 aa).

Belongs to the universal ribosomal protein uL14 family. As to quaternary structure, part of the 50S ribosomal subunit. Forms a cluster with proteins L3 and L19. In the 70S ribosome, L14 and L19 interact and together make contacts with the 16S rRNA in bridges B5 and B8.

In terms of biological role, binds to 23S rRNA. Forms part of two intersubunit bridges in the 70S ribosome. This is Large ribosomal subunit protein uL14 from Paenarthrobacter aurescens (strain TC1).